We begin with the raw amino-acid sequence, 85 residues long: UPF0297 protein Cbei_1105 (85 aa).

Belongs to the UPF0297 family.

The protein is UPF0297 protein Cbei_1105 of Clostridium beijerinckii (strain ATCC 51743 / NCIMB 8052) (Clostridium acetobutylicum).